We begin with the raw amino-acid sequence, 157 residues long: Protein Smg homolog (157 aa).

The protein belongs to the Smg family.

In Aliivibrio fischeri (strain ATCC 700601 / ES114) (Vibrio fischeri), this protein is Protein Smg homolog.